Reading from the N-terminus, the 256-residue chain is MAVGKNKRLSKGKKGIKKRTVDPFSRKDEYSVKAPSTFQIRDVGKTLVNRTSGLKNANDSLKGRIFEVSLADLQNDEDHAFRKVKLRVDEIQGKNCLTNFHGLDFTTDKLRSLVRKWQSLIEANVTVKTTDDYLLRLFAIAFTKRRPNQIKKTTYARSSQIRAIRKKMTEIMQREAASCTLSQLTTKLIPEVIGREIEKATQGIYPLQNVHIRKVKLLKAPKFDLGALLNLHGESTTDDKGHKVEREFKEQVLESV.

The segment covering 1-18 (MAVGKNKRLSKGKKGIKK) has biased composition (basic residues). The disordered stretch occupies residues 1–20 (MAVGKNKRLSKGKKGIKKRT). The residue at position 2 (Ala-2) is an N-acetylalanine; partial.

The protein belongs to the eukaryotic ribosomal protein eS1 family. As to quaternary structure, component of the small ribosomal subunit. Mature ribosomes consist of a small (40S) and a large (60S) subunit. The 40S subunit contains about 33 different proteins and 1 molecule of RNA (18S). The 60S subunit contains about 49 different proteins and 3 molecules of RNA (25S, 5.8S and 5S).

It is found in the cytoplasm. The chain is Small ribosomal subunit protein eS1 (rps1) from Aspergillus flavus (strain ATCC 200026 / FGSC A1120 / IAM 13836 / NRRL 3357 / JCM 12722 / SRRC 167).